A 268-amino-acid polypeptide reads, in one-letter code: UPF0719 transmembrane protein aq_1349 (268 aa).

Transmembrane regions (helical) follow at residues Leu-5 to Arg-24, Asn-37 to Tyr-59, Leu-69 to Arg-91, Ala-104 to Trp-126, Ser-130 to Ser-152, Phe-173 to Ser-195, Val-210 to Phe-232, and Asn-245 to Met-267.

It belongs to the UPF0719 family.

Its subcellular location is the cell membrane. The protein is UPF0719 transmembrane protein aq_1349 of Aquifex aeolicus (strain VF5).